The primary structure comprises 106 residues: UPF0145 protein BH0643 (106 aa).

Belongs to the UPF0145 family.

The chain is UPF0145 protein BH0643 from Halalkalibacterium halodurans (strain ATCC BAA-125 / DSM 18197 / FERM 7344 / JCM 9153 / C-125) (Bacillus halodurans).